Consider the following 325-residue polypeptide: Natural cytotoxicity triggering receptor 1 (325 aa).

Residues Met1–Ser16 form the signal peptide. The Extracellular segment spans residues Gln17–Arg258. Ig-like domains are found at residues Gly42 to Tyr100 and Gly137 to Gly192. Cysteines 49 and 98 form a disulfide. Asn139 is a glycosylation site (N-linked (GlcNAc...) asparagine). The cysteines at positions 144 and 190 are disulfide-linked. N-linked (GlcNAc...) asparagine glycosylation occurs at Asn216. Residues Ile259–Ser279 traverse the membrane as a helical segment. Residues Arg280 to Met325 are Cytoplasmic-facing.

This sequence belongs to the natural cytotoxicity receptor (NCR) family. In terms of assembly, interacts with CD3Z and FCER1G. As to expression, weakly expressed in spleen, heart and lung.

Its subcellular location is the cell membrane. In terms of biological role, cytotoxicity-activating receptor that may contribute to the increased efficiency of activated natural killer (NK) cells to mediate tumor cell lysis. The polypeptide is Natural cytotoxicity triggering receptor 1 (Ncr1) (Rattus norvegicus (Rat)).